The chain runs to 328 residues: tRNA U34 carboxymethyltransferase (328 aa).

Carboxy-S-adenosyl-L-methionine is bound by residues K91, W105, K110, G130, 181-182 (IE), M196, Y200, and R315.

Belongs to the class I-like SAM-binding methyltransferase superfamily. CmoB family. As to quaternary structure, homotetramer.

It carries out the reaction carboxy-S-adenosyl-L-methionine + 5-hydroxyuridine(34) in tRNA = 5-carboxymethoxyuridine(34) in tRNA + S-adenosyl-L-homocysteine + H(+). Catalyzes carboxymethyl transfer from carboxy-S-adenosyl-L-methionine (Cx-SAM) to 5-hydroxyuridine (ho5U) to form 5-carboxymethoxyuridine (cmo5U) at position 34 in tRNAs. The sequence is that of tRNA U34 carboxymethyltransferase from Pectobacterium carotovorum subsp. carotovorum (strain PC1).